A 462-amino-acid polypeptide reads, in one-letter code: ATP synthase subunit beta 1 (462 aa).

152 to 159 serves as a coordination point for ATP; it reads GGAGVGKT.

This sequence belongs to the ATPase alpha/beta chains family. F-type ATPases have 2 components, CF(1) - the catalytic core - and CF(0) - the membrane proton channel. CF(1) has five subunits: alpha(3), beta(3), gamma(1), delta(1), epsilon(1). CF(0) has four main subunits: a(1), b(1), b'(1) and c(9-12).

Its subcellular location is the cell inner membrane. The catalysed reaction is ATP + H2O + 4 H(+)(in) = ADP + phosphate + 5 H(+)(out). Its function is as follows. Produces ATP from ADP in the presence of a proton gradient across the membrane. The catalytic sites are hosted primarily by the beta subunits. The chain is ATP synthase subunit beta 1 from Dinoroseobacter shibae (strain DSM 16493 / NCIMB 14021 / DFL 12).